A 128-amino-acid chain; its full sequence is DNA-directed RNA polymerase subunit omega (128 aa).

The disordered stretch occupies residues 87-106 (ARSSQAAPKSAPGQEIGKSF).

The protein belongs to the RNA polymerase subunit omega family. The RNAP catalytic core consists of 2 alpha, 1 beta, 1 beta' and 1 omega subunit. When a sigma factor is associated with the core the holoenzyme is formed, which can initiate transcription.

It carries out the reaction RNA(n) + a ribonucleoside 5'-triphosphate = RNA(n+1) + diphosphate. Promotes RNA polymerase assembly. Latches the N- and C-terminal regions of the beta' subunit thereby facilitating its interaction with the beta and alpha subunits. The protein is DNA-directed RNA polymerase subunit omega of Anaplasma marginale (strain St. Maries).